The following is a 584-amino-acid chain: Aspartate--tRNA(Asp/Asn) ligase (584 aa).

E177 provides a ligand contact to L-aspartate. The aspartate stretch occupies residues Q201–K204. R223 provides a ligand contact to L-aspartate. ATP is bound by residues R223 to E225 and Q232. H447 is an L-aspartate binding site. E481 contributes to the ATP binding site. R488 contributes to the L-aspartate binding site. Residue G533 to R536 coordinates ATP.

The protein belongs to the class-II aminoacyl-tRNA synthetase family. Type 1 subfamily. As to quaternary structure, homodimer.

Its subcellular location is the cytoplasm. The catalysed reaction is tRNA(Asx) + L-aspartate + ATP = L-aspartyl-tRNA(Asx) + AMP + diphosphate. Its function is as follows. Aspartyl-tRNA synthetase with relaxed tRNA specificity since it is able to aspartylate not only its cognate tRNA(Asp) but also tRNA(Asn). Reaction proceeds in two steps: L-aspartate is first activated by ATP to form Asp-AMP and then transferred to the acceptor end of tRNA(Asp/Asn). The chain is Aspartate--tRNA(Asp/Asn) ligase from Chlamydia caviae (strain ATCC VR-813 / DSM 19441 / 03DC25 / GPIC) (Chlamydophila caviae).